Reading from the N-terminus, the 555-residue chain is MNVNSSSNRGEAILAALKTQFPGAVLDEERQTPEQVTITVKINLLPDVVQYLYYQHDGWLPVLFGNDERTLNGHYAVYYALSMEGAEKCWIVVKALVDADSREFPSVTPRVPAAVWGEREIRDMYGLIPVGLPDQRRLVLPDDWPEDMHPLRKDAMDYRLRPEPTTDSETYPFINEGNSDARVIPVGPLHITSDEPGHFRLFVDGEQIVDADYRLFYVHRGMEKLAETRMGYNEVTFLSDRVCGICGFAHSVAYTNSVENALGIEVPQRAHTIRSILLEVERLHSHLLNLGLSCHFVGFDTGFMQFFRVREKSMTMAELLIGSRKTYGLNLIGGVRRDILKEQRLQTLKLVREMRADVSELVEMLLATPNMEQRTQGIGILDRQIARDLRFDHPYADYGNIPKTLFTFTGGDVFSRVMVRVKETFDSLAMLEFALDNMPDTPLLTEGFSYKPHAFALGFVEAPRGEDVHWSMLGDNQKLFRWRCRAATYANWPVLRYMLRGNTVSDAPLIIGSLDPCYSCTDRVTLVDVRKRQSKTVPYKEIERYGIDRNRSPLK.

This sequence belongs to the complex I 49 kDa subunit family. Requires [4Fe-4S] cluster as cofactor.

In terms of biological role, possible component of hydrogenase 4. This is Hydrogenase-4 component G from Escherichia coli (strain K12).